An 86-amino-acid chain; its full sequence is Small ribosomal subunit protein bS20 (86 aa).

Positions 1-25 (MANIKSQIKRNKQNEKRHERNKAVK) are disordered. A compositionally biased stretch (basic and acidic residues) spans 12–22 (KQNEKRHERNK).

The protein belongs to the bacterial ribosomal protein bS20 family.

Binds directly to 16S ribosomal RNA. In Nocardioides sp. (strain ATCC BAA-499 / JS614), this protein is Small ribosomal subunit protein bS20.